Consider the following 254-residue polypeptide: Autophagy-related protein 5 (254 aa).

Lysine 102 participates in a covalent cross-link: Glycyl lysine isopeptide (Lys-Gly) (interchain with G-Cter in ATG12).

The protein belongs to the ATG5 family. As to quaternary structure, conjugated with ATG12. The ATG5-ATG12 conjugate forms a complex with several units of ATG16. The ATG12-ATG5 conjugate also associates with ATG3. In terms of processing, conjugated to ATG12; which is essential for autophagy. Conjugation with ATG12 involves ATG7 as an E1-like activating enzyme and ATG10 as an E2-like conjugating enzyme.

It is found in the preautophagosomal structure membrane. Its function is as follows. Involved in cytoplasm to vacuole transport (Cvt) and autophagic vesicle formation. Autophagy is essential for maintenance of amino acid levels and protein synthesis under nitrogen starvation. Required for selective autophagic degradation of the nucleus (nucleophagy). Also required for mitophagy, which eliminates defective or superfluous mitochondria in order to fulfill cellular energy requirements and prevent excess ROS production. Conjugation with ATG12, through a ubiquitin-like conjugating system involving ATG7 as an E1-like activating enzyme and ATG10 as an E2-like conjugating enzyme, is essential for its function. The ATG12-ATG5 conjugate acts as an E3-like enzyme which is required for lipidation of ATG8 and ATG8 association to the vesicle membranes. ATG12-ATG5 rearranges the ATG3 catalytic center and enhances its E2 activity. Autophagy is required for proper vegetative growth, asexual/sexual reproduction, and full virulence. Autophagy is particularly involved in the biosynthesis of deoxynivalenol (DON), an important virulence determinant. This chain is Autophagy-related protein 5, found in Gibberella zeae (strain ATCC MYA-4620 / CBS 123657 / FGSC 9075 / NRRL 31084 / PH-1) (Wheat head blight fungus).